A 171-amino-acid polypeptide reads, in one-letter code: UPF0098 protein aq_1250 (171 aa).

Belongs to the UPF0098 family.

The polypeptide is UPF0098 protein aq_1250 (Aquifex aeolicus (strain VF5)).